Consider the following 106-residue polypeptide: UPF0145 protein AZOSEA16190 (106 aa).

The protein belongs to the UPF0145 family.

The protein is UPF0145 protein AZOSEA16190 of Aromatoleum aromaticum (strain DSM 19018 / LMG 30748 / EbN1) (Azoarcus sp. (strain EbN1)).